The sequence spans 325 residues: S-adenosylmethionine carrier 1, chloroplastic/mitochondrial (325 aa).

The transit peptide at 1-38 directs the protein to the chloroplast and mitochondrion; it reads MAPLTLSVDVKSSSATSHDVSKRVMQSSQLKINKGFFA. Solcar repeat units lie at residues 52–124, 133–215, and 228–310; these read RTLF…TKQK, LSAV…LCLG, and ENAL…TKRT. The next 5 membrane-spanning stretches (helical) occupy residues 55 to 75, 97 to 117, 132 to 152, 230 to 250, and 285 to 305; these read FEGF…LYPI, YSGL…FVGV, HLSA…ASLI, ALIG…LDVI, and GIGP…GVLE.

Belongs to the mitochondrial carrier (TC 2.A.29) family. Expressed in seedlings, cotyledons, leaves and flowers. Lower levels of expression in stems and roots. Not detected in senescent leaves, petals and pollen grains.

It is found in the mitochondrion membrane. The protein resides in the plastid. Its subcellular location is the chloroplast membrane. With respect to regulation, inhibited strongly by tannic acid, bromocresol purple, mercuric chloride, mersalyl, p-hydroxymercuribenzoate, S-adenosylhomocysteine, S-adenosylcysteine and adenosylornithine, and to a lesser extent by N-ethylmaleimide, bathophenanthroline and pyridoxal-5'-P. Its function is as follows. Transporter involved in exchange reactions through membranes. Has a low uniporter activity. Specifically mediates the transport of S-adenosylmethionine (SAM) and its closest analogs. Probably involved in the uptake of SAM in exchange for S-adenosylhomocysteine (SAHC), which is produced from SAM in the mitochondrial matrix and plastidial stroma by methyltransferase activities. The chain is S-adenosylmethionine carrier 1, chloroplastic/mitochondrial (SAMC1) from Arabidopsis thaliana (Mouse-ear cress).